Here is a 498-residue protein sequence, read N- to C-terminus: Glycerol kinase (498 aa).

An ADP-binding site is contributed by Thr12. Residues Thr12, Thr13, and Ser14 each coordinate ATP. Thr12 contacts sn-glycerol 3-phosphate. Arg16 is an ADP binding site. Positions 82, 83, 135, and 245 each coordinate sn-glycerol 3-phosphate. Residues Arg82, Glu83, Tyr135, Asp245, and Gln246 each contribute to the glycerol site. ADP contacts are provided by Thr267 and Gly310. The ATP site is built by Thr267, Gly310, Gln314, and Gly411. ADP is bound by residues Gly411 and Asn415.

This sequence belongs to the FGGY kinase family. In terms of assembly, homotetramer and homodimer (in equilibrium).

It catalyses the reaction glycerol + ATP = sn-glycerol 3-phosphate + ADP + H(+). Its pathway is polyol metabolism; glycerol degradation via glycerol kinase pathway; sn-glycerol 3-phosphate from glycerol: step 1/1. Activated by phosphorylation and inhibited by fructose 1,6-bisphosphate (FBP). In terms of biological role, key enzyme in the regulation of glycerol uptake and metabolism. Catalyzes the phosphorylation of glycerol to yield sn-glycerol 3-phosphate. This Clostridium botulinum (strain Eklund 17B / Type B) protein is Glycerol kinase.